The following is a 389-amino-acid chain: Probable acyl-CoA dehydrogenase fadE25 (389 aa).

It belongs to the acyl-CoA dehydrogenase family. It depends on FAD as a cofactor.

The enzyme catalyses a 2,3-saturated acyl-CoA + A = a 2,3-dehydroacyl-CoA + AH2. This Mycobacterium leprae (strain TN) protein is Probable acyl-CoA dehydrogenase fadE25 (fadE25).